We begin with the raw amino-acid sequence, 260 residues long: Phosphate import ATP-binding protein PstB (260 aa).

The ABC transporter domain occupies 13-255 (MRAQGVNVFY…PKQERTKDYI (243 aa)). 45–52 (GPSGCGKS) provides a ligand contact to ATP.

It belongs to the ABC transporter superfamily. Phosphate importer (TC 3.A.1.7) family. In terms of assembly, the complex is composed of two ATP-binding proteins (PstB), two transmembrane proteins (PstC and PstA) and a solute-binding protein (PstS).

The protein localises to the cell inner membrane. It carries out the reaction phosphate(out) + ATP + H2O = ADP + 2 phosphate(in) + H(+). Functionally, part of the ABC transporter complex PstSACB involved in phosphate import. Responsible for energy coupling to the transport system. The chain is Phosphate import ATP-binding protein PstB from Sphingopyxis alaskensis (strain DSM 13593 / LMG 18877 / RB2256) (Sphingomonas alaskensis).